The primary structure comprises 536 residues: CTP synthase (536 aa).

Positions 1–267 are amidoligase domain; the sequence is MSKFVFVTGG…CKETLKYLDL (267 aa). A CTP-binding site is contributed by Ser-13. Ser-13 lines the UTP pocket. Residues 14-19 and Asp-71 each bind ATP; that span reads SIGKGI. Mg(2+) is bound by residues Asp-71 and Glu-141. CTP-binding positions include 148-150, 188-193, and Lys-224; these read DIE and KTKPTQ. UTP contacts are provided by residues 188–193 and Lys-224; that span reads KTKPTQ. Residues 292–534 form the Glutamine amidotransferase type-1 domain; sequence KVALVGKYIE…IKASQDKLTQ (243 aa). Gly-354 contacts L-glutamine. Cys-381 serves as the catalytic Nucleophile; for glutamine hydrolysis. L-glutamine contacts are provided by residues 382-385, Glu-405, and Arg-462; that span reads LGMQ. Residues His-507 and Glu-509 contribute to the active site.

It belongs to the CTP synthase family. As to quaternary structure, homotetramer.

The enzyme catalyses UTP + L-glutamine + ATP + H2O = CTP + L-glutamate + ADP + phosphate + 2 H(+). The catalysed reaction is L-glutamine + H2O = L-glutamate + NH4(+). It carries out the reaction UTP + NH4(+) + ATP = CTP + ADP + phosphate + 2 H(+). It functions in the pathway pyrimidine metabolism; CTP biosynthesis via de novo pathway; CTP from UDP: step 2/2. Allosterically activated by GTP, when glutamine is the substrate; GTP has no effect on the reaction when ammonia is the substrate. The allosteric effector GTP functions by stabilizing the protein conformation that binds the tetrahedral intermediate(s) formed during glutamine hydrolysis. Inhibited by the product CTP, via allosteric rather than competitive inhibition. Its function is as follows. Catalyzes the ATP-dependent amination of UTP to CTP with either L-glutamine or ammonia as the source of nitrogen. Regulates intracellular CTP levels through interactions with the four ribonucleotide triphosphates. The chain is CTP synthase from Prochlorococcus marinus (strain AS9601).